The chain runs to 130 residues: uncharacterized protein (130 aa).

The next 3 membrane-spanning stretches (helical) occupy residues 34–54 (AILI…FAFF), 73–93 (LLLT…GWLA), and 107–127 (FGTG…IVWI).

The protein localises to the cell membrane. This is an uncharacterized protein from Mycoplasma pneumoniae (strain ATCC 29342 / M129 / Subtype 1) (Mycoplasmoides pneumoniae).